The primary structure comprises 356 residues: Tyrosine recombinase XerS (356 aa).

The Core-binding (CB) domain occupies 16–121 (LMPWYVLEYY…ALSSLYKYLT (106 aa)). The Tyr recombinase domain maps to 169–354 (GFLTYIDQEH…VNDEQKNALD (186 aa)). Active-site residues include Arg-210, Lys-234, His-306, Arg-309, and His-332. The active-site O-(3'-phospho-DNA)-tyrosine intermediate is the Tyr-341.

It belongs to the 'phage' integrase family. XerS subfamily.

It is found in the cytoplasm. Its activity is regulated as follows. FtsK is required for recombination. Functionally, site-specific tyrosine recombinase, which acts by catalyzing the cutting and rejoining of the recombining DNA molecules. Essential to convert dimers of the bacterial chromosome into monomers to permit their segregation at cell division. This Streptococcus pneumoniae (strain P1031) protein is Tyrosine recombinase XerS.